The primary structure comprises 233 residues: Large ribosomal subunit protein uL1 (233 aa).

The protein belongs to the universal ribosomal protein uL1 family. In terms of assembly, part of the 50S ribosomal subunit.

Binds directly to 23S rRNA. The L1 stalk is quite mobile in the ribosome, and is involved in E site tRNA release. Its function is as follows. Protein L1 is also a translational repressor protein, it controls the translation of the L11 operon by binding to its mRNA. This is Large ribosomal subunit protein uL1 from Vibrio parahaemolyticus serotype O3:K6 (strain RIMD 2210633).